Consider the following 216-residue polypeptide: MSCLPALDKFLDNYHRSYLSTLGELPRYYPQGEPSLCIQGEFDEASDEAVSWLPVKREHLGSFANVEHALELTLWPDINHFYGEYFAAPVLFDSPWGTGELLQVWNEADFDALQQNIIGHLMMKQKLKQPATWFIGLLDEGDKMLTVDNADGSVWGEIPGELPSAQLAPSLAEFIEALSPRIAPPVKHEELPMPALEHPGIVASFKRMWHNLIGKR.

Belongs to the Syd family.

It localises to the cell inner membrane. Functionally, interacts with the SecY protein in vivo. May bind preferentially to an uncomplexed state of SecY, thus functioning either as a chelating agent for excess SecY in the cell or as a regulatory factor that negatively controls the translocase function. The protein is Protein Syd of Shewanella sp. (strain ANA-3).